Consider the following 508-residue polypeptide: GMP synthase [glutamine-hydrolyzing] (508 aa).

A Glutamine amidotransferase type-1 domain is found at 1–189 (MIVVLDFGSQ…ALLVCGCEKT (189 aa)). C78 serves as the catalytic Nucleophile. Residues H163 and E165 contribute to the active site. A GMPS ATP-PPase domain is found at 190–383 (WGMQNFAQKE…LGVSQDFLMR (194 aa)). Residue 217-223 (SGGVDST) participates in ATP binding.

As to quaternary structure, homodimer.

It catalyses the reaction XMP + L-glutamine + ATP + H2O = GMP + L-glutamate + AMP + diphosphate + 2 H(+). Its pathway is purine metabolism; GMP biosynthesis; GMP from XMP (L-Gln route): step 1/1. Its function is as follows. Catalyzes the synthesis of GMP from XMP. The sequence is that of GMP synthase [glutamine-hydrolyzing] from Helicobacter acinonychis (strain Sheeba).